Consider the following 1038-residue polypeptide: Translation initiation factor IF-2 (1038 aa).

Disordered regions lie at residues 39 to 346 (TISE…KWQE) and 403 to 451 (KPKA…PEKV). Residues 103 to 125 (RNTTSNAPEASVANNQIASSEAN) are compositionally biased toward polar residues. Residues 157 to 176 (PQKPAAPEAEPEAQSQAPAK) are compositionally biased toward low complexity. Composition is skewed to basic and acidic residues over residues 178–197 (AVEK…ERQP) and 226–243 (PILK…DQAK). Residues 407 to 423 (ARAATAATAAPISSPTT) are compositionally biased toward low complexity. Basic and acidic residues predominate over residues 431–450 (NNRDQNRRQETEVKRERPEK). In terms of domain architecture, tr-type G spans 532 to 705 (RRPPVVTIMG…LLVAEVGELS (174 aa)). A G1 region spans residues 541–548 (GHVDHGKT). 541-548 (GHVDHGKT) contacts GTP. The segment at 566–570 (GITQH) is G2. The tract at residues 591 to 594 (DTPG) is G3. GTP is bound by residues 591–595 (DTPGH) and 645–648 (NKID). The segment at 645–648 (NKID) is G4. The interval 681–683 (SAI) is G5.

This sequence belongs to the TRAFAC class translation factor GTPase superfamily. Classic translation factor GTPase family. IF-2 subfamily.

The protein localises to the cytoplasm. In terms of biological role, one of the essential components for the initiation of protein synthesis. Protects formylmethionyl-tRNA from spontaneous hydrolysis and promotes its binding to the 30S ribosomal subunits. Also involved in the hydrolysis of GTP during the formation of the 70S ribosomal complex. The polypeptide is Translation initiation factor IF-2 (Trichormus variabilis (strain ATCC 29413 / PCC 7937) (Anabaena variabilis)).